We begin with the raw amino-acid sequence, 389 residues long: Urotensin-2 receptor (389 aa).

2 stretches are compositionally biased toward polar residues: residues 1-10 and 28-39; these read MALTPESPSS and PNATLNSSWASP. The disordered stretch occupies residues 1-39; sequence MALTPESPSSFPGLAAIGSSVPEPPGSPNATLNSSWASP. Residues 1-54 are Extracellular-facing; it reads MALTPESPSSFPGLAAIGSSVPEPPGSPNATLNSSWASPTEPSSLEDLVATGAI. 2 N-linked (GlcNAc...) asparagine glycosylation sites follow: Asn29 and Asn33. Residues 55-77 traverse the membrane as a helical segment; that stretch reads GTLLSAMGVVGVVGNAYTLVVTC. Over 78–87 the chain is Cytoplasmic; sequence RSLRAVASMY. The chain crosses the membrane as a helical span at residues 88 to 113; the sequence is IYVVNLALADLLYLLSIPFIVATYIT. The Extracellular portion of the chain corresponds to 114–124; it reads KEWHFGDVGCR. Cys123 and Cys199 are oxidised to a cystine. Residues 125–146 form a helical membrane-spanning segment; sequence VLFSLDFLTMHASIFTLTVMSS. Topologically, residues 147–167 are cytoplasmic; sequence ERYAAVLRPLDTVQRPKGYRK. A helical membrane pass occupies residues 168–186; the sequence is LLALGTWLLALLLTLPVML. At 187–209 the chain is on the extracellular side; sequence AMRLVRRGPKSLCLPAWGPRAHR. The helical transmembrane segment at 210-232 threads the bilayer; it reads AYLTLLFATSIAGPGLLIGLLYA. Residues 233 to 258 are Cytoplasmic-facing; the sequence is RLARAYRRSQRASFKRARRPGARALR. A helical membrane pass occupies residues 259-284; sequence LVLGIVLLFWACFLPFWLWQLLAQYR. At 285-297 the chain is on the extracellular side; the sequence is EAPLAPRTARIVN. The chain crosses the membrane as a helical span at residues 298–318; it reads YLTTCLTYGNSCANPFLYTLL. The Cytoplasmic segment spans residues 319-389; sequence TRNYRDHLRG…PALESPGDPA (71 aa). A disordered region spans residues 328–366; the sequence is GRVRSPGSGGVRGPVPSLQPRARFQRGSGRSLSSCSPQP. Residues 355–366 show a composition bias toward polar residues; that stretch reads SGRSLSSCSPQP.

The protein belongs to the G-protein coupled receptor 1 family.

It localises to the cell membrane. High affinity receptor for urotensin-2 and urotensin-2B. The activity of this receptor is mediated by a G-protein that activate a phosphatidylinositol-calcium second messenger system. The polypeptide is Urotensin-2 receptor (UTS2R) (Macaca mulatta (Rhesus macaque)).